Here is a 436-residue protein sequence, read N- to C-terminus: 3-ketoacyl-CoA thiolase (436 aa).

Cys-99 acts as the Acyl-thioester intermediate in catalysis. Catalysis depends on proton acceptor residues His-392 and Cys-422.

The protein belongs to the thiolase-like superfamily. Thiolase family. As to quaternary structure, heterotetramer of two alpha chains (FadJ) and two beta chains (FadI).

It is found in the cytoplasm. The catalysed reaction is an acyl-CoA + acetyl-CoA = a 3-oxoacyl-CoA + CoA. The protein operates within lipid metabolism; fatty acid beta-oxidation. Functionally, catalyzes the final step of fatty acid oxidation in which acetyl-CoA is released and the CoA ester of a fatty acid two carbons shorter is formed. The sequence is that of 3-ketoacyl-CoA thiolase from Escherichia coli (strain 55989 / EAEC).